The chain runs to 525 residues: Protein shisa-6 (525 aa).

An N-terminal signal peptide occupies residues 1–30 (MALRRLLLPPLLLSLLLSLASLHLPPGADA). Over 31 to 180 (ARGRSGNRTL…NKYDPEKDKT (150 aa)) the chain is Extracellular. N-linked (GlcNAc...) asparagine glycosylation is found at asparagine 37 and asparagine 62. The helical transmembrane segment at 181 to 201 (NFTVYITCGVIAFVIVAGVFA) threads the bilayer. At 202–525 (KVSYDKAHRP…YTASKTEVTV (324 aa)) the chain is on the cytoplasmic side. Residues 241-294 (ISAIDTSPKENTPVRSTSKNHYTPVRTAKQTPGDRQYNHPILSSATQTPTHEKP) are disordered. Positions 243-261 (AIDTSPKENTPVRSTSKNH) are enriched in polar residues. Phosphoserine occurs at positions 416, 422, and 434. Threonine 458 is subject to Phosphothreonine. The segment at 469–495 (MHSHPSASNNSYATLGQSQTAAKRHAF) is disordered. Positions 473–489 (PSASNNSYATLGQSQTA) are enriched in polar residues. Threonine 502 bears the Phosphothreonine mark. The PDZ-binding motif lies at 522 to 525 (EVTV).

This sequence belongs to the shisa family. As to quaternary structure, component of the postsynaptic hippocampal AMPA-type glutamate receptor (AMPAR) complex, at least composed of pore forming AMPAR subunits GRIA1, GRIA2 and GRIA3 and AMPAR auxiliary proteins SHISA6 and SHISA7. Interacts (via PDZ-binding motif) with DLG4/PSD-95 (via PDZ domain); the interaction is direct. N-glycosylated. As to expression, highly expressed in cerebellum and hippocampal neurons: CA1 stratum oriens and stratum radiatum, CA3 stratum oriens and stratum lucidum, and the dentate gyrus polymorphic layer. Expressed in other brain structures including olfactory bulb, cortex, amygdala and midbrain (at protein level). Also expressed in a subset of spermatogonial stem cells. Also expressed in eye, heart, kidney, lung, muscle and spleen. Isoform 2: Specifically expressed in hippocampus.

The protein localises to the postsynaptic density membrane. Involved in maintenance of high-frequency synaptic transmission at hippocampal CA3-CA1 synapses. Regulates AMPA-type glutamate receptor (AMPAR) immobilization at postsynaptic density keeping the channels in an activated state in the presence of glutamate and preventing synaptic depression. May play a role in self-renewal and differentiation of spermatogonial stem cells by inhibiting canonical Wnt signaling pathway. In Mus musculus (Mouse), this protein is Protein shisa-6.